The primary structure comprises 513 residues: 2,3-bisphosphoglycerate-independent phosphoglycerate mutase (513 aa).

Asp14 and Ser64 together coordinate Mn(2+). Ser64 acts as the Phosphoserine intermediate in catalysis. Substrate is bound by residues His125, 155–156, Arg187, Arg193, 259–262, and Lys333; these read RD and RADR. Positions 400, 404, 441, 442, and 460 each coordinate Mn(2+).

It belongs to the BPG-independent phosphoglycerate mutase family. In terms of assembly, monomer. Requires Mn(2+) as cofactor.

It carries out the reaction (2R)-2-phosphoglycerate = (2R)-3-phosphoglycerate. The protein operates within carbohydrate degradation; glycolysis; pyruvate from D-glyceraldehyde 3-phosphate: step 3/5. Functionally, catalyzes the interconversion of 2-phosphoglycerate and 3-phosphoglycerate. The sequence is that of 2,3-bisphosphoglycerate-independent phosphoglycerate mutase from Pseudomonas fluorescens (strain ATCC BAA-477 / NRRL B-23932 / Pf-5).